Here is a 73-residue protein sequence, read N- to C-terminus: Conotoxin CnIIIE (73 aa).

The N-terminal stretch at 1-19 is a signal peptide; that stretch reads MSKLGVLLTICLLLFPLTA. Positions 20–49 are excised as a propeptide; the sequence is LPMDGDQSVDRPAERMQDDISSEQYPLFNQ. Intrachain disulfides connect C53/C72, C54/C70, and C60/C73.

It belongs to the conotoxin M superfamily. In terms of tissue distribution, expressed by the venom duct.

It is found in the secreted. Shows a paralytic effect in fish. The protein is Conotoxin CnIIIE of Conus consors (Singed cone).